The following is a 915-amino-acid chain: Rab3 GTPase-activating protein catalytic subunit (915 aa).

The protein belongs to the Rab3-GAP catalytic subunit family. As to quaternary structure, the Rab3 GTPase-activating complex is a heterodimer composed of rbg-1 and rbg-2.

Its subcellular location is the cytoplasm. Probable catalytic subunit of a GTPase activating protein that has specificity for Rab3 subfamily. Rab3 proteins are involved in regulated exocytosis of neurotransmitters and hormones. Specifically converts active Rab3-GTP to the inactive form Rab3-GDP. This Caenorhabditis elegans protein is Rab3 GTPase-activating protein catalytic subunit (rbg-1).